Reading from the N-terminus, the 337-residue chain is DNA-directed RNA polymerase subunit alpha (337 aa).

The segment at 1–233 (MIREKVTVST…DLFIPFLHME (233 aa)) is alpha N-terminal domain (alpha-NTD). The segment at 266 to 337 (KLALKSIFID…FAIDLPKNQF (72 aa)) is alpha C-terminal domain (alpha-CTD).

The protein belongs to the RNA polymerase alpha chain family. In terms of assembly, in plastids the minimal PEP RNA polymerase catalytic core is composed of four subunits: alpha, beta, beta', and beta''. When a (nuclear-encoded) sigma factor is associated with the core the holoenzyme is formed, which can initiate transcription.

It localises to the plastid. The protein localises to the chloroplast. The catalysed reaction is RNA(n) + a ribonucleoside 5'-triphosphate = RNA(n+1) + diphosphate. Its function is as follows. DNA-dependent RNA polymerase catalyzes the transcription of DNA into RNA using the four ribonucleoside triphosphates as substrates. In Ipomoea purpurea (Common morning glory), this protein is DNA-directed RNA polymerase subunit alpha.